We begin with the raw amino-acid sequence, 108 residues long: U3-lycotoxin-Ls1w (108 aa).

The signal sequence occupies residues Met1–Ala20. A propeptide spanning residues Glu21–Arg44 is cleaved from the precursor. 4 cysteine pairs are disulfide-bonded: Cys48–Cys63, Cys55–Cys72, Cys62–Cys87, and Cys74–Cys85.

Belongs to the neurotoxin 19 (CSTX) family. 01 subfamily. In terms of tissue distribution, expressed by the venom gland.

It localises to the secreted. This is U3-lycotoxin-Ls1w from Lycosa singoriensis (Wolf spider).